The chain runs to 337 residues: Protoheme IX farnesyltransferase (337 aa).

Over residues 1 to 17 (MPFSISKDTVSNQTTHV) the composition is skewed to polar residues. Residues 1-41 (MPFSISKDTVSNQTTHVATAPASQRPDPVETKVEQEQGRPR) form a disordered region. The segment covering 27–41 (DPVETKVEQEQGRPR) has biased composition (basic and acidic residues). Helical transmembrane passes span 59 to 79 (IIEL…HGVP), 81 to 101 (LGLV…ANVF), 130 to 150 (SALI…GFGA), 153 to 173 (LSAA…SMLL), 196 to 216 (WTAV…IVFW), 250 to 270 (VAIQ…VLWP), 271 to 291 (VAHM…VFIV), and 311 to 331 (PMGL…AIAV).

It belongs to the UbiA prenyltransferase family. Protoheme IX farnesyltransferase subfamily.

It is found in the cell membrane. It catalyses the reaction heme b + (2E,6E)-farnesyl diphosphate + H2O = Fe(II)-heme o + diphosphate. It participates in porphyrin-containing compound metabolism; heme O biosynthesis; heme O from protoheme: step 1/1. Converts heme B (protoheme IX) to heme O by substitution of the vinyl group on carbon 2 of heme B porphyrin ring with a hydroxyethyl farnesyl side group. This is Protoheme IX farnesyltransferase from Cutibacterium acnes (strain DSM 16379 / KPA171202) (Propionibacterium acnes).